The chain runs to 77 residues: Small ribosomal subunit protein bS21 (77 aa).

Belongs to the bacterial ribosomal protein bS21 family.

The polypeptide is Small ribosomal subunit protein bS21 (Methylococcus capsulatus (strain ATCC 33009 / NCIMB 11132 / Bath)).